Here is a 582-residue protein sequence, read N- to C-terminus: WD repeat-containing protein JIP5 (582 aa).

WD repeat units follow at residues lysine 27 to serine 68, arginine 125 to lysine 168, aspartate 177 to leucine 216, aspartate 265 to glutamine 310, and glycine 373 to aspartate 410. Disordered regions lie at residues glutamate 405–leucine 496 and threonine 531–leucine 582. 2 stretches are compositionally biased toward acidic residues: residues aspartate 410–valine 438 and glutamate 447–threonine 485. Basic and acidic residues-rich tracts occupy residues threonine 531–aspartate 540 and glutamine 570–leucine 582.

This sequence belongs to the WD repeat WDR55 family.

It is found in the nucleus. It localises to the nucleolus. This Debaryomyces hansenii (strain ATCC 36239 / CBS 767 / BCRC 21394 / JCM 1990 / NBRC 0083 / IGC 2968) (Yeast) protein is WD repeat-containing protein JIP5 (JIP5).